Consider the following 1259-residue polypeptide: Neural cell adhesion molecule L1 (1259 aa).

Residues 1–19 (MVMMLWYVLPLLLCSPCLL) form the signal peptide. At 20-1122 (IQIPDEYKGH…VSTTGSFASE (1103 aa)) the chain is on the extracellular side. Ig-like C2-type domains lie at 35–128 (PVIT…HEIQ), 138–225 (PKET…EPID), 239–327 (PRLL…YYVT), 332–419 (PYWL…AYIY), 424–506 (PARI…NNVT), and 517–600 (TQIT…DEVE). Cystine bridges form between Cys-57/Cys-113 and Cys-157/Cys-208. N-linked (GlcNAc...) asparagine glycans are attached at residues Asn-100, Asn-202, Asn-246, and Asn-293. Intrachain disulfides connect Cys-263–Cys-311 and Cys-353–Cys-403. N-linked (GlcNAc...) asparagine glycosylation is found at Asn-432, Asn-489, and Asn-504. Cysteines 447 and 496 form a disulfide. Cys-538 and Cys-590 are oxidised to a cystine. 2 short sequence motifs (cell attachment site) span residues 553–555 (RGD) and 562–564 (RGD). 5 Fibronectin type-III domains span residues 613 to 711 (PVPH…TPEA), 716 to 809 (NPVD…SGED), 811 to 916 (PQVS…PEGV), 919 to 1014 (HPEA…MALF), and 1016 to 1116 (KPDF…VSTT). N-linked (GlcNAc...) asparagine glycosylation is present at Asn-670. The tract at residues 697 to 724 (GEPSPVSETVVTPEAAPEKNPVDVRGEG) is disordered. Basic and acidic residues predominate over residues 712-724 (APEKNPVDVRGEG). Asn-725, Asn-776, Asn-824, Asn-848, Asn-875, Asn-968, Asn-978, Asn-1021, Asn-1029, Asn-1072, and Asn-1106 each carry an N-linked (GlcNAc...) asparagine glycan. Residues 1123–1145 (GWFIAFVSAIILLLLILLILCFI) traverse the membrane as a helical segment. Topologically, residues 1146–1259 (KRSKGGKYSV…SPINPAVALE (114 aa)) are cytoplasmic. Phosphoserine is present on residues Ser-1165, Arg-1179, Ser-1180, Ser-1183, Ser-1196, Ser-1245, Ser-1246, and Ser-1250. Disordered stretches follow at residues 1182-1209 (ESDNEEKAFGSSQPSLNGDIKPLGSDDS) and 1228-1259 (IGQYSGKKEKEAAGGNDSSGATSPINPAVALE). Residues 1243–1252 (NDSSGATSPI) are compositionally biased toward polar residues.

It belongs to the immunoglobulin superfamily. L1/neurofascin/NgCAM family. Interacts with SHTN1; the interaction occurs in axonal growth cones. Interacts with isoform 2 of BSG. As to expression, isoform 2 is predominantly found in the brain, while isoform 1 is found in the peripheral nervous system.

It localises to the cell membrane. It is found in the cell projection. The protein localises to the growth cone. Neural cell adhesion molecule involved in the dynamics of cell adhesion and in the generation of transmembrane signals at tyrosine kinase receptors. During brain development, critical in multiple processes, including neuronal migration, axonal growth and fasciculation, and synaptogenesis. In the mature brain, plays a role in the dynamics of neuronal structure and function, including synaptic plasticity. This chain is Neural cell adhesion molecule L1 (L1cam), found in Rattus norvegicus (Rat).